Consider the following 106-residue polypeptide: ATP-dependent Clp protease adapter protein ClpS (106 aa).

The protein belongs to the ClpS family. As to quaternary structure, binds to the N-terminal domain of the chaperone ClpA.

Its function is as follows. Involved in the modulation of the specificity of the ClpAP-mediated ATP-dependent protein degradation. The polypeptide is ATP-dependent Clp protease adapter protein ClpS (Enterobacter sp. (strain 638)).